Consider the following 644-residue polypeptide: CTP synthase (644 aa).

In terms of domain architecture, Glutamine amidotransferase type-1 spans 300–551; that stretch reads SIAIVGKYTK…LGLILASVDR (252 aa). Catalysis depends on for GATase activity residues Cys-399, His-527, and Glu-529.

Belongs to the CTP synthase family.

It catalyses the reaction UTP + L-glutamine + ATP + H2O = CTP + L-glutamate + ADP + phosphate + 2 H(+). Its pathway is pyrimidine metabolism; CTP biosynthesis via de novo pathway; CTP from UDP: step 2/2. In terms of biological role, catalyzes the ATP-dependent amination of UTP to CTP with either L-glutamine or ammonia as the source of nitrogen. Constitutes the rate-limiting enzyme in the synthesis of cytosine nucleotides. This chain is CTP synthase, found in Drosophila pseudoobscura pseudoobscura (Fruit fly).